The sequence spans 953 residues: Isoleucine--tRNA ligase (953 aa).

The 'HIGH' region motif lies at 57–67 (PYANGDIHIGH). E582 provides a ligand contact to L-isoleucyl-5'-AMP. A 'KMSKS' region motif is present at residues 623–627 (KMSKS). K626 provides a ligand contact to ATP. Positions 916, 919, 936, and 939 each coordinate Zn(2+).

It belongs to the class-I aminoacyl-tRNA synthetase family. IleS type 1 subfamily. As to quaternary structure, monomer. Zn(2+) serves as cofactor.

It localises to the cytoplasm. The catalysed reaction is tRNA(Ile) + L-isoleucine + ATP = L-isoleucyl-tRNA(Ile) + AMP + diphosphate. Catalyzes the attachment of isoleucine to tRNA(Ile). As IleRS can inadvertently accommodate and process structurally similar amino acids such as valine, to avoid such errors it has two additional distinct tRNA(Ile)-dependent editing activities. One activity is designated as 'pretransfer' editing and involves the hydrolysis of activated Val-AMP. The other activity is designated 'posttransfer' editing and involves deacylation of mischarged Val-tRNA(Ile). The protein is Isoleucine--tRNA ligase of Bordetella bronchiseptica (strain ATCC BAA-588 / NCTC 13252 / RB50) (Alcaligenes bronchisepticus).